We begin with the raw amino-acid sequence, 384 residues long: Anhydro-N-acetylmuramic acid kinase (384 aa).

9–16 contributes to the ATP binding site; it reads GTSVDGID.

This sequence belongs to the anhydro-N-acetylmuramic acid kinase family.

It carries out the reaction 1,6-anhydro-N-acetyl-beta-muramate + ATP + H2O = N-acetyl-D-muramate 6-phosphate + ADP + H(+). It participates in amino-sugar metabolism; 1,6-anhydro-N-acetylmuramate degradation. Its pathway is cell wall biogenesis; peptidoglycan recycling. In terms of biological role, catalyzes the specific phosphorylation of 1,6-anhydro-N-acetylmuramic acid (anhMurNAc) with the simultaneous cleavage of the 1,6-anhydro ring, generating MurNAc-6-P. Is required for the utilization of anhMurNAc either imported from the medium or derived from its own cell wall murein, and thus plays a role in cell wall recycling. In Rippkaea orientalis (strain PCC 8801 / RF-1) (Cyanothece sp. (strain PCC 8801)), this protein is Anhydro-N-acetylmuramic acid kinase.